The primary structure comprises 383 residues: MSPEVALNRISPMLSPFISSVVRNGKVGLDATNCLRITDLKSGCTSLTPGPNCDRFKLHIPYAGETLKWDIIFNAQYPELPPDFIFGEDVEFLPDPSALQNLASWNPSNPECLLLVVKELVQQYHQFQCSRLRESSRLMFEYQTLLEEPQYGENMEIYAGKKNNWTGEFSARFLLKLPVDFSNIPTYLLKDVNEDPGEDVALLSVSFEDTEATQVYPKLYLSPRIEHALGGSSALHIPAFPGGGCLIDYVPQVCHLLTNKVQYVIQGYHKRREYIAAFLSHFGTGVVEYDAEGFTKLTLLLMWKDFCFLVHIDLPLFFPRDQPTLTFQSVYHFTNSGQLYSQAQKNYPYSPRWDGNEMAKRAKAYFKTFVPQFQEAAFANGKL.

The residue at position 1 (methionine 1) is an N-acetylmethionine. At serine 2 the chain carries Phosphoserine. 2 UEV-like regions span residues 30–147 and 275–364; these read DATN…TLLE and IAAF…RAKA.

This sequence belongs to the BABAM2 family. In terms of assembly, component of the ARISC complex, at least composed of UIMC1/RAP80, ABRAXAS1, BRCC3/BRCC36, BABAM2 and BABAM1/NBA1. Component of the BRCA1-A complex, at least composed of BRCA1, BARD1, UIMC1/RAP80, ABRAXAS1, BRCC3/BRCC36, BABAM2 and BABAM1/NBA1. In the BRCA1-A complex, interacts directly with ABRAXAS1, BRCC3/BRCC36 and BABAM1/NBA1. Binds polyubiquitin. Component of the BRISC complex, at least composed of ABRAXAS2, BRCC3/BRCC36, BABAM2 and BABAM1/NBA1. Identified in a complex with SHMT2 and the other subunits of the BRISC complex. Component of the BRCA1/BRCA2 containing complex (BRCC), which also contains BRCA1, BRCA2, BARD1, BRCC3/BRCC36 and RAD51. BRCC is a ubiquitin E3 ligase complex that enhances cellular survival following DNA damage. May interact with FAS and TNFRSF1A.

It localises to the cytoplasm. Its subcellular location is the nucleus. Component of the BRCA1-A complex, a complex that specifically recognizes 'Lys-63'-linked ubiquitinated histones H2A and H2AX at DNA lesions sites, leading to target the BRCA1-BARD1 heterodimer to sites of DNA damage at double-strand breaks (DSBs). The BRCA1-A complex also possesses deubiquitinase activity that specifically removes 'Lys-63'-linked ubiquitin on histones H2A and H2AX. In the BRCA1-A complex, it acts as an adapter that bridges the interaction between BABAM1/NBA1 and the rest of the complex, thereby being required for the complex integrity and modulating the E3 ubiquitin ligase activity of the BRCA1-BARD1 heterodimer. Component of the BRISC complex, a multiprotein complex that specifically cleaves 'Lys-63'-linked ubiquitin in various substrates. Within the BRISC complex, acts as an adapter that bridges the interaction between BABAM1/NBA1 and the rest of the complex, thereby being required for the complex integrity. The BRISC complex is required for normal mitotic spindle assembly and microtubule attachment to kinetochores via its role in deubiquitinating NUMA1. The BRISC complex plays a role in interferon signaling via its role in the deubiquitination of the interferon receptor IFNAR1; deubiquitination increases IFNAR1 activity by enhancing its stability and cell surface expression. Down-regulates the response to bacterial lipopolysaccharide (LPS) via its role in IFNAR1 deubiquitination. May play a role in homeostasis or cellular differentiation in cells of neural, epithelial and germline origins. May also act as a death receptor-associated anti-apoptotic protein, which inhibits the mitochondrial apoptotic pathway. May regulate TNF-alpha signaling through its interactions with TNFRSF1A; however these effects may be indirect. The polypeptide is BRISC and BRCA1-A complex member 2 (BABAM2) (Chlorocebus aethiops (Green monkey)).